A 165-amino-acid chain; its full sequence is Endoribonuclease YbeY (165 aa).

Zn(2+) is bound by residues His130, His134, and His140.

It belongs to the endoribonuclease YbeY family. Zn(2+) is required as a cofactor.

Its subcellular location is the cytoplasm. Single strand-specific metallo-endoribonuclease involved in late-stage 70S ribosome quality control and in maturation of the 3' terminus of the 16S rRNA. The chain is Endoribonuclease YbeY from Streptococcus pyogenes serotype M1.